The sequence spans 429 residues: Adenylosuccinate synthetase (429 aa).

GTP is bound by residues 12–18 and 40–42; these read GDEGKGK and GHT. D13 acts as the Proton acceptor in catalysis. Residues D13 and G40 each coordinate Mg(2+). IMP contacts are provided by residues 13-16, 38-41, T129, R143, Q224, T239, and R303; these read DEGK and NAGH. Residue H41 is the Proton donor of the active site. Residue 299–305 coordinates substrate; the sequence is VTTGRAR. GTP is bound by residues R305, 331–333, and 413–415; these read KLD and GVG.

This sequence belongs to the adenylosuccinate synthetase family. In terms of assembly, homodimer. Mg(2+) is required as a cofactor.

It is found in the cytoplasm. The catalysed reaction is IMP + L-aspartate + GTP = N(6)-(1,2-dicarboxyethyl)-AMP + GDP + phosphate + 2 H(+). It functions in the pathway purine metabolism; AMP biosynthesis via de novo pathway; AMP from IMP: step 1/2. In terms of biological role, plays an important role in the de novo pathway of purine nucleotide biosynthesis. Catalyzes the first committed step in the biosynthesis of AMP from IMP. The chain is Adenylosuccinate synthetase from Rhodococcus jostii (strain RHA1).